A 205-amino-acid polypeptide reads, in one-letter code: Ras-related protein RABD1 (205 aa).

Serine 2 is subject to N-acetylserine. Residues 15 to 23 (GDSSVGKSC), 33 to 40 (YIDSYIST), 63 to 67 (DTAGQ), 121 to 124 (NKND), and 151 to 153 (SAK) each bind GTP. The Effector region signature appears at 37 to 45 (YISTIGVDF). Polar residues-rich tracts occupy residues 174-186 (GSQT…SGPG) and 194-205 (PIQQNNGGCCGQ). A disordered region spans residues 174 to 205 (GSQTNANKTSGPGTVQMKGQPIQQNNGGCCGQ). 2 S-geranylgeranyl cysteine lipidation sites follow: cysteine 202 and cysteine 203.

The protein belongs to the small GTPase superfamily. Rab family. Does not interact with GC5. Interacts with XI-2/MYA2.

It localises to the golgi apparatus. The protein localises to the trans-Golgi network membrane. It is found in the golgi apparatus membrane. Its function is as follows. Protein transport. Regulator of membrane traffic from the Golgi apparatus towards the endoplasmic reticulum (ER). The polypeptide is Ras-related protein RABD1 (RABD1) (Arabidopsis thaliana (Mouse-ear cress)).